We begin with the raw amino-acid sequence, 149 residues long: SsrA-binding protein (149 aa).

Residues 121–149 (GKKQHDKRAAEKDREWQREKQRLVRSAQH) are disordered. Residues 127 to 142 (KRAAEKDREWQREKQR) are compositionally biased toward basic and acidic residues.

The protein belongs to the SmpB family.

Its subcellular location is the cytoplasm. Its function is as follows. Required for rescue of stalled ribosomes mediated by trans-translation. Binds to transfer-messenger RNA (tmRNA), required for stable association of tmRNA with ribosomes. tmRNA and SmpB together mimic tRNA shape, replacing the anticodon stem-loop with SmpB. tmRNA is encoded by the ssrA gene; the 2 termini fold to resemble tRNA(Ala) and it encodes a 'tag peptide', a short internal open reading frame. During trans-translation Ala-aminoacylated tmRNA acts like a tRNA, entering the A-site of stalled ribosomes, displacing the stalled mRNA. The ribosome then switches to translate the ORF on the tmRNA; the nascent peptide is terminated with the 'tag peptide' encoded by the tmRNA and targeted for degradation. The ribosome is freed to recommence translation, which seems to be the essential function of trans-translation. The sequence is that of SsrA-binding protein from Thiobacillus denitrificans (strain ATCC 25259 / T1).